The sequence spans 186 residues: dCTP deaminase (186 aa).

107–112 is a binding site for dCTP; sequence KSTYAR. Glu-133 acts as the Proton donor/acceptor in catalysis. Positions 152, 166, and 176 each coordinate dCTP.

This sequence belongs to the dCTP deaminase family. As to quaternary structure, homotrimer.

The catalysed reaction is dCTP + H2O + H(+) = dUTP + NH4(+). The protein operates within pyrimidine metabolism; dUMP biosynthesis; dUMP from dCTP (dUTP route): step 1/2. Functionally, catalyzes the deamination of dCTP to dUTP. This chain is dCTP deaminase, found in Campylobacter jejuni subsp. doylei (strain ATCC BAA-1458 / RM4099 / 269.97).